The chain runs to 94 residues: Cell division protein FtsB (94 aa).

Residues 1 to 3 (MRV) are Cytoplasmic-facing. The chain crosses the membrane as a helical span at residues 4–21 (FALTLSLLLVWLLYTLMW). At 22-94 (GKNGVMDFRA…YRIIGEESRQ (73 aa)) the chain is on the periplasmic side. A coiled-coil region spans residues 33 to 76 (QAEIEVQQQVNANLHLRNQEMFAEIDDLRQGLDAIEERARNELG).

This sequence belongs to the FtsB family. As to quaternary structure, part of a complex composed of FtsB, FtsL and FtsQ.

It is found in the cell inner membrane. Essential cell division protein. May link together the upstream cell division proteins, which are predominantly cytoplasmic, with the downstream cell division proteins, which are predominantly periplasmic. The chain is Cell division protein FtsB from Vibrio cholerae serotype O1 (strain ATCC 39315 / El Tor Inaba N16961).